Here is an 855-residue protein sequence, read N- to C-terminus: Transcription factor gaf1 (855 aa).

The span at 72-112 (KNLTPNGDSNTLTPDTFSDPTAPSSAQSVPPTSSAETTADN) shows a compositional bias: polar residues. Disordered stretches follow at residues 72–126 (KNLT…PAYS), 149–184 (TSFD…ESQP), 229–287 (SHNL…GFPS), 412–483 (PNSN…DMFS), 602–643 (NKNA…TRTT), and 680–768 (KKRN…SQSM). The segment covering 149-168 (TSFDESTAKSKKRSIADSHF) has biased composition (basic and acidic residues). Ser150 bears the Phosphoserine mark. Composition is skewed to low complexity over residues 240–250 (PANSNNSASPN) and 428–444 (NSSK…DSNQ). Residues 445-476 (ENAESFNPSISSHNSAEWASGETTGHSSNSPL) show a composition bias toward polar residues. Residues 614–623 (AEDKKGDANT) are compositionally biased toward basic and acidic residues. 2 stretches are compositionally biased toward low complexity: residues 625-643 (RANA…TRTT) and 707-717 (SKSSSAKSTAA). A GATA-type zinc finger spans residues 635 to 659 (CTNCQTRTTPLWRRSPDGQPLCNAC). 2 positions are modified to phosphoserine: Ser727 and Ser729. Residues 755 to 767 (QQQSSENESKSQS) show a composition bias toward low complexity.

It localises to the nucleus. Functionally, transcriptional activator. The chain is Transcription factor gaf1 (gaf1) from Schizosaccharomyces pombe (strain 972 / ATCC 24843) (Fission yeast).